The following is a 577-amino-acid chain: 9-cis-epoxycarotenoid dioxygenase NCED6, chloroplastic (577 aa).

Residues 1–25 form a disordered region; sequence MQHSLRSDLLPTKTSPRSHLLPQPK. Fe cation-binding residues include His-276, His-325, His-390, and His-563.

It belongs to the carotenoid oxygenase family. It depends on Fe(2+) as a cofactor. Expressed before fertilization in male and female gametophytes, and then immediately after pollination, restricted to seed endosperm.

The protein resides in the plastid. The protein localises to the chloroplast stroma. The enzyme catalyses a 9-cis-epoxycarotenoid + O2 = a 12'-apo-carotenal + 2-cis,4-trans-xanthoxin. It carries out the reaction 9-cis-violaxanthin + O2 = (3S,5R,6S)-5,6-epoxy-3-hydroxy-5,6-dihydro-12'-apo-beta-caroten-12'-al + 2-cis,4-trans-xanthoxin. It catalyses the reaction 9'-cis-neoxanthin + O2 = (3S,5R,6R)-3,5-dihydroxy-6,7-didehydro-5,6-dihydro-12'-apo-beta-caroten-12'-al + 2-cis,4-trans-xanthoxin. In terms of biological role, has a 11,12(11',12') 9-cis epoxycarotenoid cleavage activity. Catalyzes the first step of abscisic-acid biosynthesis from carotenoids. Contributes probably to abscisic acid synthesis for the induction of seed dormancy. This is 9-cis-epoxycarotenoid dioxygenase NCED6, chloroplastic (NCED6) from Arabidopsis thaliana (Mouse-ear cress).